A 372-amino-acid polypeptide reads, in one-letter code: Flagellar P-ring protein (372 aa).

The N-terminal stretch at 1-29 (MPARPIPVPAFALALALAAALAVPAPAAA) is a signal peptide.

It belongs to the FlgI family. In terms of assembly, the basal body constitutes a major portion of the flagellar organelle and consists of four rings (L,P,S, and M) mounted on a central rod.

It is found in the periplasm. It localises to the bacterial flagellum basal body. Its function is as follows. Assembles around the rod to form the L-ring and probably protects the motor/basal body from shearing forces during rotation. The protein is Flagellar P-ring protein of Anaeromyxobacter dehalogenans (strain 2CP-1 / ATCC BAA-258).